The chain runs to 376 residues: METLSNASGTFAIRLLKILCQDNPSHNVFCSPVSISSALAMVLLGAKGNTATQMAQALSLNTEEDIHRAFQSLLTEVNKAGTQYLLRTANRLFGEKTCQFLSTFKESCLQFYHAELKELSFIRAAEESRKHINTWVSKKTEGKIEELLPGSSIDAETRLVLVNAIYFKGKWNEPFDETYTREMPFKINQEEQRPVQMMYQEATFKLAHVGEVRAQLLELPYARKELSLLVLLPDDGVELSTVEKSLTFEKLTAWTKPDCMKSTEVEVLLPKFKLQEDYDMESVLRHLGIVDAFQQGKADLSAMSAERDLCLSKFVHKSFVEVNEEGTEAAAASSCFVVAECCMESGPRFCADHPFLFFIRHNRANSILFCGRFSSP.

M1 carries the N-acetylmethionine modification.

Belongs to the serpin family. Ov-serpin subfamily.

It localises to the cytoplasm. Granzyme B inhibitor. In Homo sapiens (Human), this protein is Serpin B9 (SERPINB9).